A 232-amino-acid chain; its full sequence is Ubiquinone biosynthesis O-methyltransferase (232 aa).

S-adenosyl-L-methionine is bound by residues Arg-36, Gly-55, Asp-76, and Met-120.

It belongs to the methyltransferase superfamily. UbiG/COQ3 family.

It carries out the reaction a 3-demethylubiquinol + S-adenosyl-L-methionine = a ubiquinol + S-adenosyl-L-homocysteine + H(+). The enzyme catalyses a 3-(all-trans-polyprenyl)benzene-1,2-diol + S-adenosyl-L-methionine = a 2-methoxy-6-(all-trans-polyprenyl)phenol + S-adenosyl-L-homocysteine + H(+). It participates in cofactor biosynthesis; ubiquinone biosynthesis. Its function is as follows. O-methyltransferase that catalyzes the 2 O-methylation steps in the ubiquinone biosynthetic pathway. This chain is Ubiquinone biosynthesis O-methyltransferase, found in Burkholderia cenocepacia (strain ATCC BAA-245 / DSM 16553 / LMG 16656 / NCTC 13227 / J2315 / CF5610) (Burkholderia cepacia (strain J2315)).